The sequence spans 426 residues: Serine--tRNA ligase (426 aa).

Position 231 to 233 (231 to 233 (TAE)) interacts with L-serine. 262–264 (RSE) is a binding site for ATP. L-serine is bound at residue Glu285. 349–352 (EISS) contributes to the ATP binding site. Ser385 lines the L-serine pocket.

Belongs to the class-II aminoacyl-tRNA synthetase family. Type-1 seryl-tRNA synthetase subfamily. As to quaternary structure, homodimer. The tRNA molecule binds across the dimer.

It localises to the cytoplasm. It catalyses the reaction tRNA(Ser) + L-serine + ATP = L-seryl-tRNA(Ser) + AMP + diphosphate + H(+). It carries out the reaction tRNA(Sec) + L-serine + ATP = L-seryl-tRNA(Sec) + AMP + diphosphate + H(+). It functions in the pathway aminoacyl-tRNA biosynthesis; selenocysteinyl-tRNA(Sec) biosynthesis; L-seryl-tRNA(Sec) from L-serine and tRNA(Sec): step 1/1. Catalyzes the attachment of serine to tRNA(Ser). Is also able to aminoacylate tRNA(Sec) with serine, to form the misacylated tRNA L-seryl-tRNA(Sec), which will be further converted into selenocysteinyl-tRNA(Sec). This Saccharophagus degradans (strain 2-40 / ATCC 43961 / DSM 17024) protein is Serine--tRNA ligase.